The primary structure comprises 239 residues: tRNA1(Val) (adenine(37)-N6)-methyltransferase (239 aa).

It belongs to the methyltransferase superfamily. tRNA (adenine-N(6)-)-methyltransferase family.

The protein localises to the cytoplasm. The catalysed reaction is adenosine(37) in tRNA1(Val) + S-adenosyl-L-methionine = N(6)-methyladenosine(37) in tRNA1(Val) + S-adenosyl-L-homocysteine + H(+). Specifically methylates the adenine in position 37 of tRNA(1)(Val) (anticodon cmo5UAC). The chain is tRNA1(Val) (adenine(37)-N6)-methyltransferase from Vibrio vulnificus (strain YJ016).